The primary structure comprises 233 residues: Sugar fermentation stimulation protein homolog (233 aa).

This sequence belongs to the SfsA family.

The polypeptide is Sugar fermentation stimulation protein homolog (Chelativorans sp. (strain BNC1)).